Here is a 375-residue protein sequence, read N- to C-terminus: Alpha-2,8-sialyltransferase 8B (375 aa).

The Cytoplasmic portion of the chain corresponds to 1–6 (MQLQFR). Residues 7 to 23 (SWMLAALTLLVVFLIFA) traverse the membrane as a helical; Signal-anchor for type II membrane protein segment. Residues 24–375 (DISEIEEEIG…LTVGQCDGAT (352 aa)) are Lumenal-facing. N-linked (GlcNAc...) asparagine glycosylation is found at asparagine 60, asparagine 72, asparagine 89, and asparagine 134. 2 cysteine pairs are disulfide-bonded: cysteine 157–cysteine 307 and cysteine 171–cysteine 371. Residues asparagine 162 and asparagine 185 each contribute to the CMP-N-acetyl-beta-neuraminate site. N-linked (GlcNAc...) asparagine glycosylation is found at asparagine 219 and asparagine 234. Positions 294, 295, 296, 316, 329, and 330 each coordinate CMP-N-acetyl-beta-neuraminate. Histidine 346 serves as the catalytic Proton donor/acceptor.

This sequence belongs to the glycosyltransferase 29 family. Autopolysialylated. Autopolysialylation is not a prerequisite for the polysialylation acitity, but enhances the polysialylation acitity. Expressed only in newborn brain.

The protein localises to the golgi apparatus membrane. It is found in the secreted. The protein resides in the cell membrane. It catalyses the reaction [N-acetyl-alpha-D-neuraminosyl-(2-&gt;8)](n) + CMP-N-acetyl-beta-neuraminate = [N-acetyl-alpha-D-neuraminosyl-(2-&gt;8)](n+1) + CMP + H(+). It participates in protein modification; protein glycosylation. Functionally, catalyzes the transfer of a sialic acid from a CMP-linked sialic acid donor onto a terminal alpha-2,3-, alpha-2,6-, or alpha-2,8-linked sialic acid of an N-linked glycan acceptor through alpha-2,8-linkages. Therefore, participates in polysialic acid synthesis on various sialylated N-acetyllactosaminyl oligosaccharides (alpha-2,3-, alpha-2,6-, or alpha-2,8-linked sialic acid), including NCAM1, NCAM1 N-glycans, FETUB N-glycans, and to a lesser extent sialylparagloboside (SPG) and AHSG, which does not require the initial addition of an alpha 2,8-sialic acid. However, does not exhibit sialic acid-polymerase activity. Catalyzes polysialic acid synthesis in the hippocampal on NCAM1 and supports neurite outgrowth. ST8SIA2-mediated polysialylation influences on oligodendrocyte differentiation and may promote the integrity of myelin and axons. The polypeptide is Alpha-2,8-sialyltransferase 8B (Rattus norvegicus (Rat)).